We begin with the raw amino-acid sequence, 777 residues long: Glucocorticoid receptor (777 aa).

A compositionally biased stretch (basic and acidic residues) spans 1–14; that stretch reads MDSKESLTPGKEEN. Residues 1–22 form a disordered region; the sequence is MDSKESLTPGKEENPSSVLTQE. The segment at 1 to 420 is modulating; that stretch reads MDSKESLTPG…TATTGPPPKL (420 aa). The residue at position 8 (T8) is a Phosphothreonine. Position 23 is an omega-N-methylarginine (R23). Phosphoserine occurs at positions 45, 113, 134, and 141. A disordered region spans residues 130–182; the sequence is NRSTSVPENPKSSASSSVSAAPKEKEFPKTHSDVSSEQQNLKGQTGSNGGNVK. A compositionally biased stretch (low complexity) spans 134-150; it reads SVPENPKSSASSSVSAA. A compositionally biased stretch (basic and acidic residues) spans 151–163; the sequence is PKEKEFPKTHSDV. Positions 164 to 174 are enriched in polar residues; the sequence is SSEQQNLKGQT. 3 positions are modified to phosphoserine: S203, S211, and S226. K258 participates in a covalent cross-link: Glycyl lysine isopeptide (Lys-Gly) (interchain with G-Cter in SUMO2). S267 is subject to Phosphoserine. Residues K277 and K293 each participate in a glycyl lysine isopeptide (Lys-Gly) (interchain with G-Cter in SUMO); alternate cross-link. Residues K277 and K293 each participate in a glycyl lysine isopeptide (Lys-Gly) (interchain with G-Cter in SUMO2); alternate cross-link. A compositionally biased stretch (low complexity) spans 394–414; that stretch reads SSPSMRPDVSSPPSSSSTATT. Residues 394–415 form a disordered region; the sequence is SSPSMRPDVSSPPSSSSTATTG. The residue at position 404 (S404) is a Phosphoserine. A Glycyl lysine isopeptide (Lys-Gly) (interchain with G-Cter in ubiquitin) cross-link involves residue K419. 2 NR C4-type zinc fingers span residues 421-441 and 457-481; these read CLVC…CGSC and CAGR…YRKC. Residues 421–486 constitute a DNA-binding region (nuclear receptor); the sequence is CLVCSDEASG…RYRKCLQAGM (66 aa). An N6-acetyllysine mark is found at K480, K492, K494, and K495. An interaction with CLOCK region spans residues 485 to 777; that stretch reads GMNLEARKTK…NIKKLLFHQK (293 aa). Residues 487-523 form a hinge region; it reads NLEARKTKKKIKGIQQATTGVSQETSENPANKTIVPA. Residues 524–758 enclose the NR LBD domain; the sequence is TLPQLTPTLV…FPEMLAEIIT (235 aa). An interaction with CRY1 region spans residues 532–697; that stretch reads LVSLLEVIEP…EIRMTYIKEL (166 aa). A Glycyl lysine isopeptide (Lys-Gly) (interchain with G-Cter in SUMO) cross-link involves residue K703.

The protein belongs to the nuclear hormone receptor family. NR3 subfamily. As to quaternary structure, heteromultimeric cytoplasmic complex with HSP90AA1, HSPA1A/HSPA1B, and FKBP5 or another immunophilin such as PPID, STIP1, or the immunophilin homolog PPP5C. Upon ligand binding FKBP5 dissociates from the complex and FKBP4 takes its place, thereby linking the complex to dynein and mediating transport to the nucleus, where the complex dissociates. Probably forms a complex composed of chaperones HSP90 and HSP70, co-chaperones CDC37, PPP5C, TSC1 and client protein TSC2, CDK4, AKT, RAF1 and NR3C1; this complex does not contain co-chaperones STIP1/HOP and PTGES3/p23. Directly interacts with UNC45A. Binds to DNA as a homodimer, and as heterodimer with NR3C2 or the retinoid X receptor. Binds STAT5A and STAT5B homodimers and heterodimers. Interacts with NRIP1, POU2F1, POU2F2 and TRIM28. Interacts with several coactivator complexes, including the SMARCA4 complex, CREBBP/EP300, TADA2L (Ada complex) and p160 coactivators such as NCOA2 and NCOA6. Interaction with BAG1 inhibits transactivation. Interacts with HEXIM1 and TGFB1I1. Interacts with NCOA1. Interacts with NCOA3, SMARCA4, SMARCC1, SMARCD1, and SMARCE1. Interacts with CLOCK, CRY1 and CRY2 in a ligand-dependent fashion. Interacts with CIART. Interacts with RWDD3. Interacts with UBE2I/UBC9 and this interaction is enhanced in the presence of RWDD3. Interacts with GRIP1. Interacts with NR4A3 (via nuclear receptor DNA-binding domain), represses transcription activity of NR4A3 on the POMC promoter Nur response element (NurRE). Directly interacts with PNRC2 to attract and form a complex with UPF1 and DCP1A; the interaction leads to rapid mRNA degradation. Interacts with GSK3B. Interacts with FNIP1 and FNIP2. Interacts (via C-terminus) with HNRNPU (via C-terminus). Interacts with MCM3AP. Interacts (via domain NR LBD) with HSP90AA1 and HSP90AB1. In the absence of hormonal ligand, interacts with TACC1. Interacts (via NR LBD domain) with ZNF764 (via KRAB domain); the interaction regulates transcription factor activity of NR3C1 by directing its actions toward certain biologic pathways. Post-translationally, acetylation by CLOCK reduces its binding to glucocorticoid response elements and its transcriptional activity. Increased proteasome-mediated degradation in response to glucocorticoids. In terms of processing, phosphorylated in the absence of hormone; becomes hyperphosphorylated in the presence of glucocorticoid. The Ser-203, Ser-226 and Ser-404-phosphorylated forms are mainly cytoplasmic, and the Ser-211-phosphorylated form is nuclear. Phosphorylation at Ser-211 increases transcriptional activity. Phosphorylation at Ser-203, Ser-226 and Ser-404 decreases signaling capacity. Phosphorylation at Ser-404 may protect from glucocorticoid-induced apoptosis. Phosphorylation at Ser-203 and Ser-211 is not required in regulation of chromosome segregation. May be dephosphorylated by PPP5C, attenuates NR3C1 action. Post-translationally, ubiquitinated by UBR5, leading to its degradation: UBR5 specifically recognizes and binds ligand-bound NR3C1 when it is not associated with coactivators (NCOAs). In presence of NCOAs, the UBR5-degron is not accessible, preventing its ubiquitination and degradation. Sumoylation at Lys-277 and Lys-293 negatively regulates its transcriptional activity. Sumoylation at Lys-703 positively regulates its transcriptional activity in the presence of RWDD3. Sumoylation at Lys-277 and Lys-293 is dispensable whereas sumoylation at Lys-703 is critical for the stimulatory effect of RWDD3 on its transcriptional activity. Heat shock increases sumoylation in a RWDD3-dependent manner.

The protein localises to the cytoplasm. It localises to the nucleus. Its subcellular location is the mitochondrion. The protein resides in the cytoskeleton. It is found in the spindle. The protein localises to the microtubule organizing center. It localises to the centrosome. Its subcellular location is the chromosome. The protein resides in the nucleoplasm. In terms of biological role, receptor for glucocorticoids (GC). Has a dual mode of action: as a transcription factor that binds to glucocorticoid response elements (GRE), both for nuclear and mitochondrial DNA, and as a modulator of other transcription factors. Affects inflammatory responses, cellular proliferation and differentiation in target tissues. Involved in chromatin remodeling. Plays a role in rapid mRNA degradation by binding to the 5' UTR of target mRNAs and interacting with PNRC2 in a ligand-dependent manner which recruits the RNA helicase UPF1 and the mRNA-decapping enzyme DCP1A, leading to RNA decay. Could act as a coactivator for STAT5-dependent transcription upon growth hormone (GH) stimulation and could reveal an essential role of hepatic GR in the control of body growth. Mediates glucocorticoid-induced apoptosis. Promotes accurate chromosome segregation during mitosis. May act as a tumor suppressor. May play a negative role in adipogenesis through the regulation of lipolytic and antilipogenic gene expression. In Saimiri boliviensis boliviensis (Bolivian squirrel monkey), this protein is Glucocorticoid receptor (NR3C1).